Consider the following 1561-residue polypeptide: ABC-type transporter phomO' (1561 aa).

The next 7 helical transmembrane spans lie at 34–54 (LYFEEVVFVLVPSCVFILLAA), 110–130 (CTAGLLVTLHVAGLILLCTTV), 139–159 (SVPASVVAALAFGVVPVLAHF), 172–192 (SSSLLVGLFLCVAVLLRAPLV), 202–222 (GSALVAVEIASLVLQLVLIAV), 314–334 (LGLYALAPVIPRLCLAGFTLA), and 358–378 (GLIGATFLIYTGIAVSTGWYW). In terms of domain architecture, ABC transmembrane type-1 1 spans 326–599 (LCLAGFTLAQ…LLQIIPSFGA (274 aa)). Residue N384 is glycosylated (N-linked (GlcNAc...) asparagine). The next 4 membrane-spanning stretches (helical) occupy residues 428-448 (LAYAHELWVAPIETAIGTWML), 452-472 (VGPPGLVVLGIIGVCLGTSTY), 535-555 (LIVGTLLSSYSTATLAPVLVF), and 577-597 (LIWISLLASPLIQLLQIIPSF). The ABC transporter 1 domain occupies 645–871 (IHNSSFSYTD…VEDENGDVDN (227 aa)). N647 is a glycosylation site (N-linked (GlcNAc...) asparagine). 678–685 (GPAGCGKS) contacts ATP. N721 carries N-linked (GlcNAc...) asparagine glycosylation. The tract at residues 853-899 (YQFPPSQADVEDENGDVDNGAENTRPRESSHTTEAQSGPPEPKSKPT) is disordered. The next 4 helical transmembrane spans lie at 913–933 (SIGFLNLVLFIGGGIIFAFCL), 969–989 (VLPLIAVAGWVAQLMMLIVPL), 1037–1054 (LFNTAAALLTGIAQVILI), and 1147–1167 (LVLNLVVAGLALVVMGAAVGL). In terms of domain architecture, ABC transmembrane type-1 2 spans 920–1209 (VLFIGGGIIF…LLTAWTSLET (290 aa)). N-linked (GlcNAc...) asparagine glycosylation occurs at N1189. A compositionally biased stretch (basic and acidic residues) spans 1229-1238 (DVLVRPDSLD). Residues 1229–1298 (DVLVRPDSLD…DVAADGEKHE (70 aa)) form a disordered region. Acidic residues predominate over residues 1269–1280 (YDDDDESDENTD). Residues 1297–1545 (HEATTITTTS…SDIFAFFGRS (249 aa)) enclose the ABC transporter 2 domain. 1333 to 1340 (GRTGSGKS) lines the ATP pocket. The N-linked (GlcNAc...) asparagine glycan is linked to N1496.

Belongs to the ABC transporter superfamily. ABCC family. Conjugate transporter (TC 3.A.1.208) subfamily.

The protein localises to the membrane. ABC-type transporter; part of the gene cluster that mediates the biosynthesis of the phomopsins, a group of hexapeptide mycotoxins which infects lupins and causes lupinosis disease in livestock. This Diaporthe leptostromiformis (Lupinosis disease fungus) protein is ABC-type transporter phomO'.